Consider the following 478-residue polypeptide: Transposase for insertion sequence element IS231B (478 aa).

The protein belongs to the transposase 11 family.

In terms of biological role, involved in the transposition of the insertion sequence. The sequence is that of Transposase for insertion sequence element IS231B from Bacillus thuringiensis subsp. berliner.